An 801-amino-acid polypeptide reads, in one-letter code: U-box domain-containing protein 34 (801 aa).

The tract at residues Arg-205–Val-309 is disordered. Residues Leu-236–Thr-254 show a composition bias toward polar residues. Residues Val-289–Val-309 show a composition bias toward basic and acidic residues. Positions Glu-301–Glu-395 form a coiled coil. The 264-residue stretch at Phe-442–Leu-705 folds into the Protein kinase domain. ATP-binding positions include Ile-448–Val-456 and Lys-469. The active-site Proton acceptor is Asp-564. One can recognise a U-box domain in the interval Arg-724 to Ser-797.

It belongs to the protein kinase superfamily. Ser/Thr protein kinase family.

The enzyme catalyses L-seryl-[protein] + ATP = O-phospho-L-seryl-[protein] + ADP + H(+). It catalyses the reaction L-threonyl-[protein] + ATP = O-phospho-L-threonyl-[protein] + ADP + H(+). The catalysed reaction is S-ubiquitinyl-[E2 ubiquitin-conjugating enzyme]-L-cysteine + [acceptor protein]-L-lysine = [E2 ubiquitin-conjugating enzyme]-L-cysteine + N(6)-ubiquitinyl-[acceptor protein]-L-lysine.. It participates in protein modification; protein ubiquitination. Functions as an E3 ubiquitin ligase. The sequence is that of U-box domain-containing protein 34 (PUB34) from Arabidopsis thaliana (Mouse-ear cress).